The sequence spans 601 residues: Elongation factor 4 (601 aa).

A tr-type G domain is found at 7–189; the sequence is SNVRNFSIVA…AIVTRLPPPK (183 aa). GTP contacts are provided by residues 19–24 and 136–139; these read DHGKST and NKVD.

This sequence belongs to the TRAFAC class translation factor GTPase superfamily. Classic translation factor GTPase family. LepA subfamily.

The protein resides in the cell inner membrane. It carries out the reaction GTP + H2O = GDP + phosphate + H(+). Required for accurate and efficient protein synthesis under certain stress conditions. May act as a fidelity factor of the translation reaction, by catalyzing a one-codon backward translocation of tRNAs on improperly translocated ribosomes. Back-translocation proceeds from a post-translocation (POST) complex to a pre-translocation (PRE) complex, thus giving elongation factor G a second chance to translocate the tRNAs correctly. Binds to ribosomes in a GTP-dependent manner. This chain is Elongation factor 4, found in Afipia carboxidovorans (strain ATCC 49405 / DSM 1227 / KCTC 32145 / OM5) (Oligotropha carboxidovorans).